The primary structure comprises 434 residues: Putative ankyrin repeat protein FPV219 (434 aa).

ANK repeat units follow at residues 33–62 (DDLS…DVNL), 66–95 (EVCS…DTDC), 101–131 (HGTP…HEIY), 132–161 (TKNH…DVNT), 165–195 (LYGY…ESYS), 196–225 (LYPS…DVNA), and 229–258 (EGNT…DTSI).

The sequence is that of Putative ankyrin repeat protein FPV219 from Fowlpox virus (strain NVSL) (FPV).